Here is a 415-residue protein sequence, read N- to C-terminus: Serine--tRNA ligase (415 aa).

231-233 (TAE) serves as a coordination point for L-serine. ATP is bound at residue 262–264 (RSE). Glu285 is a binding site for L-serine. 349-352 (EISS) serves as a coordination point for ATP. Ser383 contacts L-serine.

The protein belongs to the class-II aminoacyl-tRNA synthetase family. Type-1 seryl-tRNA synthetase subfamily. As to quaternary structure, homodimer. The tRNA molecule binds across the dimer.

It is found in the cytoplasm. It carries out the reaction tRNA(Ser) + L-serine + ATP = L-seryl-tRNA(Ser) + AMP + diphosphate + H(+). It catalyses the reaction tRNA(Sec) + L-serine + ATP = L-seryl-tRNA(Sec) + AMP + diphosphate + H(+). It functions in the pathway aminoacyl-tRNA biosynthesis; selenocysteinyl-tRNA(Sec) biosynthesis; L-seryl-tRNA(Sec) from L-serine and tRNA(Sec): step 1/1. In terms of biological role, catalyzes the attachment of serine to tRNA(Ser). Is also able to aminoacylate tRNA(Sec) with serine, to form the misacylated tRNA L-seryl-tRNA(Sec), which will be further converted into selenocysteinyl-tRNA(Sec). The polypeptide is Serine--tRNA ligase (Helicobacter pylori (strain G27)).